The sequence spans 858 residues: Leucine--tRNA ligase (858 aa).

The 'HIGH' region signature appears at 42–52 (PYPSGRLHMGH). The 'KMSKS' region motif lies at 618–622 (KMSKS). Lys-621 is an ATP binding site.

Belongs to the class-I aminoacyl-tRNA synthetase family.

It localises to the cytoplasm. It catalyses the reaction tRNA(Leu) + L-leucine + ATP = L-leucyl-tRNA(Leu) + AMP + diphosphate. The protein is Leucine--tRNA ligase of Vibrio atlanticus (strain LGP32) (Vibrio splendidus (strain Mel32)).